We begin with the raw amino-acid sequence, 160 residues long: Dysbindin domain-containing protein 1 (160 aa).

Ser-3, Ser-97, and Ser-121 each carry phosphoserine. Residues 95–160 (ADSDDENLAT…FLTVEEPKED (66 aa)) form a disordered region. The segment covering 127 to 143 (TRAEQNREKQPPSDPER) has biased composition (basic and acidic residues).

The protein belongs to the dysbindin family.

This is Dysbindin domain-containing protein 1 (Dbndd1) from Mus musculus (Mouse).